We begin with the raw amino-acid sequence, 164 residues long: UPF0262 protein Xaut_1232 (164 aa).

This sequence belongs to the UPF0262 family.

The chain is UPF0262 protein Xaut_1232 from Xanthobacter autotrophicus (strain ATCC BAA-1158 / Py2).